Consider the following 94-residue polypeptide: Sulfocarbamoylase-1 (94 aa).

Homodimer. Ubiquitous (at protein level). Highest levels of expression in crystalline style followed by digestive gland and mantle.

Its activity is regulated as follows. Strongly inhibited by the serine proteinase inhibitor AEBSF. Weakly inhibited by the proteinase inhibitors BSF and aprotinin, and by EDTA. Not inhibited by the proteinase inhibitors bestatin, E-64 and leupeptin. Hydrolysis of sulfocarbamoyl esters of paralytic shellfish toxins. Does not hydrolyze the carbamoyl esters of paralytic shellfish toxins. Ester hydrolysis is significantly affected by the stereochemistry of sulfate esters at C-11 of the substrate toxin. The chain is Sulfocarbamoylase-1 from Megangulus venulosus (Japanese bivalve).